A 563-amino-acid polypeptide reads, in one-letter code: Probable Xaa-Pro aminopeptidase PEPP (563 aa).

Mn(2+) contacts are provided by Asp331, Asp342, Glu491, and Glu532.

This sequence belongs to the peptidase M24B family. It depends on Mn(2+) as a cofactor.

It carries out the reaction Release of any N-terminal amino acid, including proline, that is linked to proline, even from a dipeptide or tripeptide.. Its function is as follows. Catalyzes the removal of a penultimate prolyl residue from the N-termini of peptides. The chain is Probable Xaa-Pro aminopeptidase PEPP (PEPP) from Verticillium alfalfae (strain VaMs.102 / ATCC MYA-4576 / FGSC 10136) (Verticillium wilt of alfalfa).